Reading from the N-terminus, the 185-residue chain is ATP synthase subunit b (185 aa).

Residues 26–46 (LVLIGFAILLFIVIKFVVPMF) traverse the membrane as a helical segment.

This sequence belongs to the ATPase B chain family. In terms of assembly, F-type ATPases have 2 components, F(1) - the catalytic core - and F(0) - the membrane proton channel. F(1) has five subunits: alpha(3), beta(3), gamma(1), delta(1), epsilon(1). F(0) has three main subunits: a(1), b(2) and c(10-14). The alpha and beta chains form an alternating ring which encloses part of the gamma chain. F(1) is attached to F(0) by a central stalk formed by the gamma and epsilon chains, while a peripheral stalk is formed by the delta and b chains.

Its subcellular location is the cell membrane. F(1)F(0) ATP synthase produces ATP from ADP in the presence of a proton or sodium gradient. F-type ATPases consist of two structural domains, F(1) containing the extramembraneous catalytic core and F(0) containing the membrane proton channel, linked together by a central stalk and a peripheral stalk. During catalysis, ATP synthesis in the catalytic domain of F(1) is coupled via a rotary mechanism of the central stalk subunits to proton translocation. Its function is as follows. Component of the F(0) channel, it forms part of the peripheral stalk, linking F(1) to F(0). This chain is ATP synthase subunit b, found in Renibacterium salmoninarum (strain ATCC 33209 / DSM 20767 / JCM 11484 / NBRC 15589 / NCIMB 2235).